The chain runs to 150 residues: Large ribosomal subunit protein bL9 (150 aa).

This sequence belongs to the bacterial ribosomal protein bL9 family.

Binds to the 23S rRNA. The protein is Large ribosomal subunit protein bL9 of Streptococcus pneumoniae (strain CGSP14).